The sequence spans 599 residues: Mediator of RNA polymerase II transcription subunit 26 (599 aa).

The TFIIS N-terminal domain maps to 10–87 (QIRDRLLQAI…RSWQKLIEPV (78 aa)). Disordered regions lie at residues 98 to 331 (AGAP…RLEL), 352 to 403 (AGLG…RDYT), and 427 to 470 (FDPM…LQSP). The segment covering 123 to 133 (SVHDLKYRNDM) has biased composition (basic and acidic residues). The span at 174-191 (VPNSSPLPTNGISGSPES) shows a compositional bias: polar residues. Basic and acidic residues predominate over residues 207–218 (NRLEHGENDKHS). Over residues 314–324 (SPLPLAQPSTP) the composition is skewed to pro residues. The span at 441–463 (EPVRADSPVHTEQPRTELDKPEA) shows a compositional bias: basic and acidic residues. Phosphoserine occurs at positions 447 and 469.

The protein belongs to the Mediator complex subunit 26 family. In terms of assembly, component of the Mediator complex, which is composed of MED1, MED4, MED6, MED7, MED8, MED9, MED10, MED11, MED12, MED13, MED13L, MED14, MED15, MED16, MED17, MED18, MED19, MED20, MED21, MED22, MED23, MED24, MED25, MED26, MED27, MED29, MED30, MED31, CCNC, CDK8 and CDC2L6/CDK11. The MED12, MED13, CCNC and CDK8 subunits form a distinct module termed the CDK8 module. Mediator containing the CDK8 module is less active than Mediator lacking this module in supporting transcriptional activation. Individual preparations of the Mediator complex lacking one or more distinct subunits have been variously termed ARC, CRSP, DRIP, PC2, SMCC and TRAP. Interacts with CEBPB (when not methylated).

The protein resides in the nucleus. Component of the Mediator complex, a coactivator involved in the regulated transcription of nearly all RNA polymerase II-dependent genes. Mediator functions as a bridge to convey information from gene-specific regulatory proteins to the basal RNA polymerase II transcription machinery. Mediator is recruited to promoters by direct interactions with regulatory proteins and serves as a scaffold for the assembly of a functional pre-initiation complex with RNA polymerase II and the general transcription factors. The protein is Mediator of RNA polymerase II transcription subunit 26 (MED26) of Bos taurus (Bovine).